We begin with the raw amino-acid sequence, 268 residues long: Thiazole synthase (268 aa).

Catalysis depends on Lys96, which acts as the Schiff-base intermediate with DXP. Residues Gly157, 185–186, and 207–208 each bind 1-deoxy-D-xylulose 5-phosphate; these read AG and NT. The segment at 238–268 is disordered; that stretch reads PMRPREAASPSSPVEGVPFTPTGPRPGRGPQ. The segment covering 258–268 has biased composition (pro residues); it reads PTGPRPGRGPQ.

The protein belongs to the ThiG family. In terms of assembly, homotetramer. Forms heterodimers with either ThiH or ThiS.

The protein localises to the cytoplasm. It carries out the reaction [ThiS sulfur-carrier protein]-C-terminal-Gly-aminoethanethioate + 2-iminoacetate + 1-deoxy-D-xylulose 5-phosphate = [ThiS sulfur-carrier protein]-C-terminal Gly-Gly + 2-[(2R,5Z)-2-carboxy-4-methylthiazol-5(2H)-ylidene]ethyl phosphate + 2 H2O + H(+). It functions in the pathway cofactor biosynthesis; thiamine diphosphate biosynthesis. Its function is as follows. Catalyzes the rearrangement of 1-deoxy-D-xylulose 5-phosphate (DXP) to produce the thiazole phosphate moiety of thiamine. Sulfur is provided by the thiocarboxylate moiety of the carrier protein ThiS. In vitro, sulfur can be provided by H(2)S. The protein is Thiazole synthase of Thermus thermophilus (strain ATCC BAA-163 / DSM 7039 / HB27).